The sequence spans 967 residues: Sarcosine oxidase subunit alpha (967 aa).

Residues Ala-141, Asp-160, Glu-161, Arg-162, Ser-168, Val-207, Ala-420, and Thr-427 each coordinate NAD(+). The (6R)-5,10-methylene-5,6,7,8-tetrahydrofolate site is built by Thr-694 and Glu-786.

This sequence belongs to the GcvT family. In terms of assembly, heterotetramer composed of subunits alpha (SoxA), beta (SoxB), gamma (SoxG) and delta (SoxD). NAD(+) is required as a cofactor.

The protein resides in the cytoplasm. It carries out the reaction sarcosine + (6S)-5,6,7,8-tetrahydrofolate + O2 = (6R)-5,10-methylene-5,6,7,8-tetrahydrofolate + glycine + H2O2. It catalyses the reaction sarcosine + O2 + H2O = formaldehyde + glycine + H2O2. Its function is as follows. In the presence of tetrahydrofolate, catalyzes the oxidative demethylation of sarcosine to yield glycine, 5,10-methylenetetrahydrofolate and hydrogen peroxide. In the absence of tetrahydrofolate, catalyzes the oxidative demethylation of sarcosine to yield glycine, formaldehyde and hydrogen peroxide. This chain is Sarcosine oxidase subunit alpha, found in Corynebacterium sp. (strain P-1).